A 489-amino-acid polypeptide reads, in one-letter code: 3-octaprenyl-4-hydroxybenzoate carboxy-lyase (489 aa).

Position 172 (asparagine 172) interacts with Mn(2+). Prenylated FMN contacts are provided by residues 175–177 (IYR), 189–191 (RWL), and 194–195 (RG). Glutamate 238 is a Mn(2+) binding site. The Proton donor role is filled by aspartate 287.

This sequence belongs to the UbiD family. In terms of assembly, homohexamer. It depends on prenylated FMN as a cofactor. Requires Mn(2+) as cofactor.

Its subcellular location is the cell membrane. It carries out the reaction a 4-hydroxy-3-(all-trans-polyprenyl)benzoate + H(+) = a 2-(all-trans-polyprenyl)phenol + CO2. Its pathway is cofactor biosynthesis; ubiquinone biosynthesis. Catalyzes the decarboxylation of 3-octaprenyl-4-hydroxy benzoate to 2-octaprenylphenol, an intermediate step in ubiquinone biosynthesis. In Salmonella arizonae (strain ATCC BAA-731 / CDC346-86 / RSK2980), this protein is 3-octaprenyl-4-hydroxybenzoate carboxy-lyase.